The primary structure comprises 507 residues: Protein MosB (507 aa).

A DNA-binding region (H-T-H motif) is located at residues 256 to 275 (QAHGALYKGQHVGLLSDIGC). Lysine 282 is modified (N6-(pyridoxal phosphate)lysine).

Belongs to the DegT/DnrJ/EryC1 family.

In terms of biological role, involved in the biosynthesis of the rhizopine 3-O-methyl-scyllo-inosamine. May have a regulatory role in controlling the housekeeping genes within the nodule which are involved in the biosynthesis of the rhizopine backbone. This Rhizobium meliloti (Ensifer meliloti) protein is Protein MosB (mosB).